A 249-amino-acid chain; its full sequence is 5'-nucleotidase SurE (249 aa).

Residues Asp9, Asp10, Ser40, and Asn92 each coordinate a divalent metal cation.

The protein belongs to the SurE nucleotidase family. Requires a divalent metal cation as cofactor.

The protein localises to the cytoplasm. The enzyme catalyses a ribonucleoside 5'-phosphate + H2O = a ribonucleoside + phosphate. Functionally, nucleotidase that shows phosphatase activity on nucleoside 5'-monophosphates. This chain is 5'-nucleotidase SurE, found in Shewanella sp. (strain MR-4).